The primary structure comprises 268 residues: Tryptophan synthase alpha chain (268 aa).

Active-site proton acceptor residues include glutamate 49 and aspartate 60.

It belongs to the TrpA family. Tetramer of two alpha and two beta chains.

The enzyme catalyses (1S,2R)-1-C-(indol-3-yl)glycerol 3-phosphate + L-serine = D-glyceraldehyde 3-phosphate + L-tryptophan + H2O. The protein operates within amino-acid biosynthesis; L-tryptophan biosynthesis; L-tryptophan from chorismate: step 5/5. In terms of biological role, the alpha subunit is responsible for the aldol cleavage of indoleglycerol phosphate to indole and glyceraldehyde 3-phosphate. This chain is Tryptophan synthase alpha chain, found in Pectobacterium atrosepticum (strain SCRI 1043 / ATCC BAA-672) (Erwinia carotovora subsp. atroseptica).